A 513-amino-acid chain; its full sequence is HTH-type transcriptional regulatory protein TyrR (513 aa).

The region spanning 2–72 (RLEVFCEDRL…GVTDVRTVPW (71 aa)) is the ACT domain. The PAS domain occupies 78–114 (EHLALSALLEALPEPVLSVDMKSKVDMANPASCQLFG). A Sigma-54 factor interaction domain is found at 206–428 (IVAVSPKMKH…LKNAIYRALT (223 aa)). Residues 234–241 (GDTGTGKD) and 290–299 (ANGGSVLLDE) contribute to the ATP site. Residues 482–502 (STRKLAKRLGVSHTAIANKLR) constitute a DNA-binding region (H-T-H motif).

Homodimer. In presence of tyrosine (or high concentrations of phenylalanine or tryptophan) and ATP, it self-associates to form an hexamer. At low tyrosine concentrations, homodimers can bind to certain recognition sequences referred to as 'strong TyrR boxes'. Homohexamers are the active repressing species, interacting with two or three tyrR boxes in the targeted regulatory DNA, including 'strong TyrR boxes' and lower-affinity sites called 'weak TyrR boxes'.

It is found in the cytoplasm. Its activity is regulated as follows. Binding of ATP strongly enhances the affinity of TyrR for tyrosine. In terms of biological role, dual transcriptional regulator of the TyrR regulon, which includes a number of genes coding for proteins involved in the biosynthesis or transport of the three aromatic amino acids, phenylalanine, tyrosine and tryptophan. These three aromatic amino acids act as effectors which bind to the TyrR protein to form an active regulatory protein. Modulates the expression of at least eight unlinked transcription units, including aroF, aroG, aroLM, aroP, mtr, tyrA, tyrB and tyrP. In most cases TyrR acts as a repressor, but positive effects have been observed on the tyrP gene, which is repressed in the presence of tyrosine and activated at high phenylalanine concentrations. Is also involved in activation, but not repression, of mtr expression in association with phenylalanine or tyrosine. Acts by binding specifically to TyrR boxes in the promoter region of the target genes. This Escherichia coli (strain K12) protein is HTH-type transcriptional regulatory protein TyrR.